Here is a 483-residue protein sequence, read N- to C-terminus: Regulatory protein ViaA (483 aa).

The protein belongs to the ViaA family. In terms of assembly, homodimer. Interacts with RavA.

The protein resides in the cytoplasm. Component of the RavA-ViaA chaperone complex, which may act on the membrane to optimize the function of some of the respiratory chains. ViaA stimulates the ATPase activity of RavA. This chain is Regulatory protein ViaA, found in Salmonella heidelberg (strain SL476).